The primary structure comprises 339 residues: DNA-directed RNA polymerase subunit alpha (339 aa).

The tract at residues 1-235 (MVIQKNWQEL…DQLQVFVNFE (235 aa)) is alpha N-terminal domain (alpha-NTD). The alpha C-terminal domain (alpha-CTD) stretch occupies residues 251 to 339 (FNPALLKKVD…DLAKRFEEHY (89 aa)).

This sequence belongs to the RNA polymerase alpha chain family. Homodimer. The RNAP catalytic core consists of 2 alpha, 1 beta, 1 beta' and 1 omega subunit. When a sigma factor is associated with the core the holoenzyme is formed, which can initiate transcription.

The enzyme catalyses RNA(n) + a ribonucleoside 5'-triphosphate = RNA(n+1) + diphosphate. In terms of biological role, DNA-dependent RNA polymerase catalyzes the transcription of DNA into RNA using the four ribonucleoside triphosphates as substrates. This Methylorubrum populi (strain ATCC BAA-705 / NCIMB 13946 / BJ001) (Methylobacterium populi) protein is DNA-directed RNA polymerase subunit alpha.